Consider the following 186-residue polypeptide: Probable nicotinate-nucleotide adenylyltransferase (186 aa).

The protein belongs to the NadD family.

The enzyme catalyses nicotinate beta-D-ribonucleotide + ATP + H(+) = deamido-NAD(+) + diphosphate. It functions in the pathway cofactor biosynthesis; NAD(+) biosynthesis; deamido-NAD(+) from nicotinate D-ribonucleotide: step 1/1. Catalyzes the reversible adenylation of nicotinate mononucleotide (NaMN) to nicotinic acid adenine dinucleotide (NaAD). The polypeptide is Probable nicotinate-nucleotide adenylyltransferase (Tropheryma whipplei (strain TW08/27) (Whipple's bacillus)).